Here is a 319-residue protein sequence, read N- to C-terminus: MSVGFIGAGQLAFALAKGFTAAGVLAAHKIMASSPDMDLATVSALRKMGVKLTPHNKETVQHSDVLFLAVKPHIIPFILDEIGADIEDRHIVVSCAAGVTISSIEKKLSAFRPAPRVIRCMTNTPVVVREGATVYATGTHAQVEDGRLMEQLLSSVGFCTEVEEDLIDAVTGLSGSGPAYAFTALDALADGGVKMGLPRRLAVRLGAQALLGAAKMLLHSEQHPGQLKDNVSSPGGATIHALHVLESGGFRSLLINAVEASCIRTRELQSMADQEQVSPAAIKKTILDKVKLDSPAGTALSPSGHTKLLPRSLAPAGKD.

Ser-2 carries the post-translational modification N-acetylserine. NADP(+)-binding positions include 6–11 and Ser-34; that span reads IGAGQL. Residues Ala-8, Gln-10, Leu-11, Ser-34, Asp-36, Asn-56, Val-70, Lys-71, and Ala-97 each coordinate NADPH. NADP(+) contacts are provided by residues Asn-56, 69-72, and 95-97; these read AVKP and CAA. L-proline is bound at residue Glu-164. Asn-230 contributes to the NADPH binding site. Positions 237 and 238 each coordinate L-proline. Phosphoserine occurs at positions 278 and 301. A disordered region spans residues 294–319; the sequence is SPAGTALSPSGHTKLLPRSLAPAGKD.

This sequence belongs to the pyrroline-5-carboxylate reductase family. In terms of assembly, homodecamer; composed of 5 homodimers. Interacts with LTO1.

Its subcellular location is the mitochondrion. The enzyme catalyses L-proline + NADP(+) = (S)-1-pyrroline-5-carboxylate + NADPH + 2 H(+). It carries out the reaction L-proline + NAD(+) = (S)-1-pyrroline-5-carboxylate + NADH + 2 H(+). It functions in the pathway amino-acid biosynthesis; L-proline biosynthesis; L-proline from L-glutamate 5-semialdehyde: step 1/1. Subject to competitive inhibition by the reaction product proline. Subject to competitive inhibition by stearoyl coenzyme A. Functionally, oxidoreductase that catalyzes the last step in proline biosynthesis, which corresponds to the reduction of pyrroline-5-carboxylate to L-proline using NAD(P)H. At physiologic concentrations, has higher specific activity in the presence of NADH. Involved in the cellular response to oxidative stress. In Homo sapiens (Human), this protein is Pyrroline-5-carboxylate reductase 1, mitochondrial.